Reading from the N-terminus, the 387-residue chain is Acetylornithine deacetylase (387 aa).

Residue H80 participates in Zn(2+) binding. D82 is an active-site residue. A Zn(2+)-binding site is contributed by D112. E144 is a catalytic residue. 3 residues coordinate Zn(2+): E145, E169, and H355.

It belongs to the peptidase M20A family. ArgE subfamily. Homodimer. Zn(2+) is required as a cofactor. The cofactor is Co(2+). Requires glutathione as cofactor.

It is found in the cytoplasm. The enzyme catalyses N(2)-acetyl-L-ornithine + H2O = L-ornithine + acetate. It functions in the pathway amino-acid biosynthesis; L-arginine biosynthesis; L-ornithine from N(2)-acetyl-L-ornithine (linear): step 1/1. In terms of biological role, catalyzes the hydrolysis of the amide bond of N(2)-acetylated L-amino acids. Cleaves the acetyl group from N-acetyl-L-ornithine to form L-ornithine, an intermediate in L-arginine biosynthesis pathway, and a branchpoint in the synthesis of polyamines. In Proteus mirabilis (strain HI4320), this protein is Acetylornithine deacetylase.